The following is a 65-amino-acid chain: Putative antitoxin VapB7 (65 aa).

This sequence belongs to the UPF0165 family.

Functionally, possibly the antitoxin component of a type II toxin-antitoxin (TA) system. Its cognate toxin is VapC7 (Potential). The polypeptide is Putative antitoxin VapB7 (vapB7) (Archaeoglobus fulgidus (strain ATCC 49558 / DSM 4304 / JCM 9628 / NBRC 100126 / VC-16)).